The sequence spans 352 residues: E3 ubiquitin-protein ligase RNF146 (352 aa).

Residues 36-74 form an RING-type zinc finger; that stretch reads CAICLQTCVHPVSLPCKHVFCYLCVKGASWLGKRCALCR. Residues Lys84 and Lys94 each participate in a glycyl lysine isopeptide (Lys-Gly) (interchain with G-Cter in ubiquitin) cross-link. Residues 91 to 167 form the WWE domain; that stretch reads EELKAASRGN…EHGRRRKIKR (77 aa). A glycoprotein is bound by residues Tyr107, Arg110, and Trp114. Lys130 participates in a covalent cross-link: Glycyl lysine isopeptide (Lys-Gly) (interchain with G-Cter in ubiquitin). Residues Tyr144, Gln153, Arg163, and Lys175 each contribute to the a glycoprotein site. Residue Lys175 forms a Glycyl lysine isopeptide (Lys-Gly) (interchain with G-Cter in ubiquitin) linkage. Disordered regions lie at residues 195-242, 259-293, and 317-352; these read SSAD…AGAS, ERSH…ASSD, and NQTV…VTEV. Over residues 197–210 the composition is skewed to low complexity; it reads ADGADSGSAHTGAS. Over residues 215 to 233 the composition is skewed to polar residues; it reads VPSSTRPLTSVDGQLTSPV. The span at 282 to 293 shows a compositional bias: acidic residues; the sequence is STEETESDASSD. A phosphoserine mark is found at Ser288 and Ser292.

As to quaternary structure, can form homooligomers. Interacts with PARsylated AXIN1, AXIN2, BLZF1, CASC3, H1-2, IPO7, LIG3, NCL, PARP1, XRCC1, XRCC5 and XRCC6. Interacts with DDB1, DHX15, IQGAP1, LRPPRC, PARP2, PRKDC, RUVBL2, TNKS1 and TNKS2. Binding often leads to interactor ubiquitination, in the presence of the appropriate E1 and E2 enzymes, and proteasomal degradation. Post-translationally, ubiquitinated; autoubiquitinated. Autoubiquitination is enhanced upon poly(ADP-ribose)-binding.

The protein localises to the cytoplasm. Its subcellular location is the cytosol. The protein resides in the nucleus. The catalysed reaction is S-ubiquitinyl-[E2 ubiquitin-conjugating enzyme]-L-cysteine + [acceptor protein]-L-lysine = [E2 ubiquitin-conjugating enzyme]-L-cysteine + N(6)-ubiquitinyl-[acceptor protein]-L-lysine.. It functions in the pathway protein modification; protein ubiquitination. E3 ubiquitin-protein ligase that specifically binds poly-ADP-ribosylated (PARsylated) proteins and mediates their ubiquitination and subsequent degradation. May regulate many important biological processes, such as cell survival and DNA damage response. Acts as an activator of the Wnt signaling pathway by mediating the ubiquitination of PARsylated AXIN1 and AXIN2, 2 key components of the beta-catenin destruction complex. Acts in cooperation with tankyrase proteins (TNKS and TNKS2), which mediate PARsylation of target proteins AXIN1, AXIN2, BLZF1, CASC3, TNKS and TNKS2. Recognizes and binds tankyrase-dependent PARsylated proteins via its WWE domain and mediates their ubiquitination, leading to their degradation. Different ubiquitin linkage types have been observed: TNKS2 undergoes ubiquitination at 'Lys-48' and 'Lys-63', while AXIN1 is only ubiquitinated at 'Lys-48'. May regulate TNKS and TNKS2 subcellular location, preventing aggregation at a centrosomal location. Neuroprotective protein. Protects the brain against N-methyl-D-aspartate (NMDA) receptor-mediated glutamate excitotoxicity and ischemia, by interfering with PAR-induced cell death, called parthanatos. Prevents nuclear translocation of AIFM1 in a PAR-binding dependent manner. Does not affect PARP1 activation. Protects against cell death induced by DNA damaging agents, such as N-methyl-N-nitro-N-nitrosoguanidine (MNNG) and rescues cells from G1 arrest. Promotes cell survival after gamma-irradiation. Facilitates DNA repair. In Rattus norvegicus (Rat), this protein is E3 ubiquitin-protein ligase RNF146 (Rnf146).